The primary structure comprises 373 residues: MEGKEGPSCEVRLPTPGAEREGPIHPELGAFGETASNTIKLSESSNDGKKEEIEEELDPRIQEELERLNQASEEINLLELQLDEARTAYRRILTESARRLNGLATQLGACIDKARPYYEARRLAKEAQQDTHSAALRYERAVSMHAAAREMVFVAEQGVTADKNRLDPTWQEMLNHATCKVNEAEEERLRSEFEHQRVTRQCHEAEAKVQTLQKSLKRFIIKSRPYFELKSQLNTILEEHKSRVTSLENSVAQAKLRYSGTLRNLEQISEEIHARRTQSSLLSQRAPPLGAEAPPSVKDGETGPPADTVSLLSLQTIASDLQKSDSVEHLRDLTDVTSLDGRETGAVECGGSRERGGDRGTGGAFRHHRSVSL.

Positions 1 to 53 (MEGKEGPSCEVRLPTPGAEREGPIHPELGAFGETASNTIKLSESSNDGKKEEI) are disordered. Residues 34–45 (TASNTIKLSESS) are compositionally biased toward polar residues. Coiled-coil stretches lie at residues 55 to 98 (EELD…ESAR) and 170 to 272 (WQEM…SEEI). Disordered regions lie at residues 276–305 (RTQS…TGPP) and 344–373 (TGAV…SVSL). Positions 344 to 358 (TGAVECGGSRERGGD) are enriched in basic and acidic residues.

It belongs to the SH3BP5 family.

Its function is as follows. Functions as a guanine nucleotide exchange factor (GEF) for rab11a. In Xenopus tropicalis (Western clawed frog), this protein is SH3 domain-binding protein 5-like (sh3bp5l).